The sequence spans 123 residues: Thioredoxin domain-containing protein 17 (123 aa).

At Ala2 the chain carries N-acetylalanine. The 83-residue stretch at 41-123 folds into the Thioredoxin domain; the sequence is SWCPDCVQAE…NLVEMLFSED (83 aa). Catalysis depends on nucleophile residues Cys43 and Cys46. A disulfide bridge connects residues Cys43 and Cys46.

The protein belongs to the thioredoxin family. Interacts with TRXR1 and DYNLL1/DNCL1. The oxidized protein is reduced by TRXR1. In terms of tissue distribution, ubiquitously expressed in cell lines.

The protein resides in the cytoplasm. Functionally, disulfide reductase. May participate in various redox reactions through the reversible oxidation of its active center dithiol to a disulfide and catalyze dithiol-disulfide exchange reactions. Modulates TNF-alpha signaling and NF-kappa-B activation. Has peroxidase activity and may contribute to the elimination of cellular hydrogen peroxide. This chain is Thioredoxin domain-containing protein 17 (TXNDC17), found in Homo sapiens (Human).